Consider the following 497-residue polypeptide: Signal recognition particle subunit SRP54 2 (497 aa).

The segment at M1–L295 is G-domain. Residues G108–T115, D190–R194, and T248–D251 each bind GTP. Positions G296–D497 are M-domain.

The protein belongs to the GTP-binding SRP family. SRP54 subfamily. In terms of assembly, component of a signal recognition particle (SRP) complex that consists of a 7SL RNA molecule of 300 nucleotides and six protein subunits: SRP72, SRP68, SRP54, SRP19, SRP14 and SRP9.

The protein localises to the cytoplasm. It is found in the endoplasmic reticulum. It carries out the reaction GTP + H2O = GDP + phosphate + H(+). Functionally, component of the signal recognition particle (SRP) complex, a ribonucleoprotein complex that mediates the cotranslational targeting of secretory and membrane proteins to the endoplasmic reticulum (ER). As part of the SRP complex, associates with the SRP receptor (SR) component SRPRA to target secretory proteins to the endoplasmic reticulum membrane. Binds to the signal sequence of presecretory proteins when they emerge from the ribosomes. Displays basal GTPase activity, and stimulates reciprocal GTPase activation of the SR subunit SRPRA. Forms a guanosine 5'-triphosphate (GTP)-dependent complex with the SR subunit SRPRA. SR compaction and GTPase mediated rearrangement of SR drive SRP-mediated cotranslational protein translocation into the ER. Requires the presence of SRP9/SRP14 and/or SRP19 to stably interact with RNA. In Hordeum vulgare (Barley), this protein is Signal recognition particle subunit SRP54 2 (SRP54-2).